The primary structure comprises 434 residues: Methylenetetrahydrofolate--tRNA-(uracil-5-)-methyltransferase TrmFO (434 aa).

An FAD-binding site is contributed by 9-14 (GAGLAG).

The protein belongs to the MnmG family. TrmFO subfamily. The cofactor is FAD.

It localises to the cytoplasm. The catalysed reaction is uridine(54) in tRNA + (6R)-5,10-methylene-5,6,7,8-tetrahydrofolate + NADH + H(+) = 5-methyluridine(54) in tRNA + (6S)-5,6,7,8-tetrahydrofolate + NAD(+). It catalyses the reaction uridine(54) in tRNA + (6R)-5,10-methylene-5,6,7,8-tetrahydrofolate + NADPH + H(+) = 5-methyluridine(54) in tRNA + (6S)-5,6,7,8-tetrahydrofolate + NADP(+). Functionally, catalyzes the folate-dependent formation of 5-methyl-uridine at position 54 (M-5-U54) in all tRNAs. This chain is Methylenetetrahydrofolate--tRNA-(uracil-5-)-methyltransferase TrmFO, found in Bacillus licheniformis (strain ATCC 14580 / DSM 13 / JCM 2505 / CCUG 7422 / NBRC 12200 / NCIMB 9375 / NCTC 10341 / NRRL NRS-1264 / Gibson 46).